The chain runs to 502 residues: Probable cytochrome P450 554A1 (502 aa).

The chain crosses the membrane as a helical span at residues 3-20 (LLLFIFFLILFYYSVKYY). C448 is a binding site for heme.

This sequence belongs to the cytochrome P450 family. Heme is required as a cofactor.

It is found in the membrane. This chain is Probable cytochrome P450 554A1 (cyp554A1), found in Dictyostelium discoideum (Social amoeba).